Here is a 485-residue protein sequence, read N- to C-terminus: UDP-N-acetylmuramate--L-alanine ligase (485 aa).

120-126 (GSHGKTT) provides a ligand contact to ATP.

The protein belongs to the MurCDEF family.

It localises to the cytoplasm. It carries out the reaction UDP-N-acetyl-alpha-D-muramate + L-alanine + ATP = UDP-N-acetyl-alpha-D-muramoyl-L-alanine + ADP + phosphate + H(+). It participates in cell wall biogenesis; peptidoglycan biosynthesis. Its function is as follows. Cell wall formation. The chain is UDP-N-acetylmuramate--L-alanine ligase from Rickettsia massiliae (strain Mtu5).